Reading from the N-terminus, the 147-residue chain is Lysozyme C-3 (147 aa).

Positions 1 to 18 are cleaved as a signal peptide; it reads MKALIILGFLFLSVAVQG. Residues 19 to 147 enclose the C-type lysozyme domain; the sequence is KVFERCELAR…VSSYVQGCTL (129 aa). Intrachain disulfides connect cysteine 24–cysteine 145, cysteine 48–cysteine 133, cysteine 83–cysteine 99, and cysteine 95–cysteine 113. Active-site residues include glutamate 53 and aspartate 71.

The protein belongs to the glycosyl hydrolase 22 family. Monomer. Stomach-specific.

The catalysed reaction is Hydrolysis of (1-&gt;4)-beta-linkages between N-acetylmuramic acid and N-acetyl-D-glucosamine residues in a peptidoglycan and between N-acetyl-D-glucosamine residues in chitodextrins.. In terms of biological role, lysozymes have primarily a bacteriolytic function; those in tissues and body fluids are associated with the monocyte-macrophage system and enhance the activity of immunoagents. In Bos taurus (Bovine), this protein is Lysozyme C-3 (LYZ3).